We begin with the raw amino-acid sequence, 353 residues long: MTATLERRESASIWGRFCDWVTSTENRLYIGWFGVLMIPTLLTATSVFIIAFIAAPPVDIDGIREPVSGSLLYGNNIISGAIIPTSAAIGLHFYPIWEAASVDEWLYNGGPYELIVLHFLLGVACYMGREWELSYRLGMRPWIAVAYSAPVAAATAVFLIYPIGQGSFSDGMPLGISGTFNFMIVFQAEHNILMHPFHMLGVAGVFGGSLFSAMHGSLVTSSLIRETTENESANAGYKFGQEEETYNIVAAHGYFGRLIFQYASFNNSRSLHFFLAAWPVVGIWFTALGISTMAFNLNGFNFNQSVVDSQGRVINTWADIINRANLGMEVMHERNAHNFPLDLAAVEAPAVNG.

Position 2 is an N-acetylthreonine (T2). T2 bears the Phosphothreonine mark. The next 3 helical transmembrane spans lie at 29 to 46 (YIGW…TATS), 118 to 133 (HFLL…EWEL), and 142 to 156 (WIAV…AATA). H118 contributes to the chlorophyll a binding site. Y126 is a binding site for pheophytin a. [CaMn4O5] cluster contacts are provided by D170 and E189. A helical transmembrane segment spans residues 197–218 (FHMLGVAGVFGGSLFSAMHGSL). H198 lines the chlorophyll a pocket. A quinone-binding positions include H215 and 264-265 (SF). H215 lines the Fe cation pocket. Position 272 (H272) interacts with Fe cation. Residues 274-288 (FLAAWPVVGIWFTAL) form a helical membrane-spanning segment. [CaMn4O5] cluster contacts are provided by H332, E333, D342, and A344. A propeptide spanning residues 345–353 (AVEAPAVNG) is cleaved from the precursor.

It belongs to the reaction center PufL/M/PsbA/D family. In terms of assembly, PSII is composed of 1 copy each of membrane proteins PsbA, PsbB, PsbC, PsbD, PsbE, PsbF, PsbH, PsbI, PsbJ, PsbK, PsbL, PsbM, PsbT, PsbX, PsbY, PsbZ, Psb30/Ycf12, at least 3 peripheral proteins of the oxygen-evolving complex and a large number of cofactors. It forms dimeric complexes. Requires The D1/D2 heterodimer binds P680, chlorophylls that are the primary electron donor of PSII, and subsequent electron acceptors. It shares a non-heme iron and each subunit binds pheophytin, quinone, additional chlorophylls, carotenoids and lipids. D1 provides most of the ligands for the Mn4-Ca-O5 cluster of the oxygen-evolving complex (OEC). There is also a Cl(-1) ion associated with D1 and D2, which is required for oxygen evolution. The PSII complex binds additional chlorophylls, carotenoids and specific lipids. as cofactor. Post-translationally, tyr-161 forms a radical intermediate that is referred to as redox-active TyrZ, YZ or Y-Z. C-terminally processed by CTPA; processing is essential to allow assembly of the oxygen-evolving complex and thus photosynthetic growth.

Its subcellular location is the plastid. It is found in the chloroplast thylakoid membrane. It catalyses the reaction 2 a plastoquinone + 4 hnu + 2 H2O = 2 a plastoquinol + O2. Photosystem II (PSII) is a light-driven water:plastoquinone oxidoreductase that uses light energy to abstract electrons from H(2)O, generating O(2) and a proton gradient subsequently used for ATP formation. It consists of a core antenna complex that captures photons, and an electron transfer chain that converts photonic excitation into a charge separation. The D1/D2 (PsbA/PsbD) reaction center heterodimer binds P680, the primary electron donor of PSII as well as several subsequent electron acceptors. The protein is Photosystem II protein D1 of Marchantia polymorpha (Common liverwort).